Consider the following 119-residue polypeptide: Ribonuclease P protein component (119 aa).

The protein belongs to the RnpA family. Consists of a catalytic RNA component (M1 or rnpB) and a protein subunit.

The enzyme catalyses Endonucleolytic cleavage of RNA, removing 5'-extranucleotides from tRNA precursor.. Functionally, RNaseP catalyzes the removal of the 5'-leader sequence from pre-tRNA to produce the mature 5'-terminus. It can also cleave other RNA substrates such as 4.5S RNA. The protein component plays an auxiliary but essential role in vivo by binding to the 5'-leader sequence and broadening the substrate specificity of the ribozyme. This Pediococcus pentosaceus (strain ATCC 25745 / CCUG 21536 / LMG 10740 / 183-1w) protein is Ribonuclease P protein component.